The following is a 543-amino-acid chain: Hydroxylamine reductase (543 aa).

Residues Cys5, Cys8, Cys17, and Cys23 each contribute to the [4Fe-4S] cluster site. The hybrid [4Fe-2O-2S] cluster site is built by His236, Glu260, Cys304, Cys398, Cys426, Cys451, Glu486, and Lys488. Position 398 is a cysteine persulfide (Cys398).

This sequence belongs to the HCP family. Requires [4Fe-4S] cluster as cofactor. The cofactor is hybrid [4Fe-2O-2S] cluster.

Its subcellular location is the cytoplasm. It catalyses the reaction A + NH4(+) + H2O = hydroxylamine + AH2 + H(+). Catalyzes the reduction of hydroxylamine to form NH(3) and H(2)O. In Bacteroides fragilis (strain YCH46), this protein is Hydroxylamine reductase.